The sequence spans 213 residues: Ribosomal RNA large subunit methyltransferase E (213 aa).

Residues glycine 68, tryptophan 70, aspartate 88, aspartate 104, and aspartate 127 each contribute to the S-adenosyl-L-methionine site. Residue lysine 167 is the Proton acceptor of the active site.

Belongs to the class I-like SAM-binding methyltransferase superfamily. RNA methyltransferase RlmE family.

The protein resides in the cytoplasm. It carries out the reaction uridine(2552) in 23S rRNA + S-adenosyl-L-methionine = 2'-O-methyluridine(2552) in 23S rRNA + S-adenosyl-L-homocysteine + H(+). Functionally, specifically methylates the uridine in position 2552 of 23S rRNA at the 2'-O position of the ribose in the fully assembled 50S ribosomal subunit. This Neorickettsia sennetsu (strain ATCC VR-367 / Miyayama) (Ehrlichia sennetsu) protein is Ribosomal RNA large subunit methyltransferase E.